Reading from the N-terminus, the 635-residue chain is BTB/POZ domain and ankyrin repeat-containing protein NPR2 (635 aa).

Residues 97 to 191 (SDADVDVADG…LYTGKLRPAP (95 aa)) enclose the BTB domain. A compositionally biased stretch (gly residues) spans 138–152 (AAGGGGGGGGGGGER). Positions 138 to 157 (AAGGGGGGGGGGGERTGGRP) are disordered. Residues 194-208 (VVSCADPMCPHDSCP) form a C2HC NPR-type zinc finger. The Zn(2+) site is built by Cys197, Cys202, His204, and Cys207. ANK repeat units lie at residues 317-347 (KRVR…TLDD), 349-376 (NALH…NLNL), and 380-409 (RGYT…AVSQ). A salicylic acid-binding core (SBC) region spans residues 439 to 576 (ESNKDRLCID…FLEDDLPDSP (138 aa)). Residue Arg484 coordinates salicylate.

Belongs to the plant 'ANKYRIN-BTB/POZ' family. 'NPR1-like' subfamily. Interacts with NRR. Interacts with TGAL1 and TGAL11.

It is found in the nucleus. Its pathway is protein modification; protein ubiquitination. Functionally, salicylic acid (SA)-binding substrate-specific adapter of an E3 ubiquitin-protein ligase complex (CUL3-RBX1-BTB) which mediates the ubiquitination and subsequent proteasomal degradation of target proteins. May be involved in regulating basal defense responses against pathogens, and may be involved in crosstalk between SA- and JA-dependent signaling pathways. Does not seem to be involved in defense response against the bacterial blight disease caused by Xanthomonas oryzae pv. oryzae (Xoo). Over-expression of NPR2/NH2 does not confer disease resistance to Xoo. The sequence is that of BTB/POZ domain and ankyrin repeat-containing protein NPR2 from Oryza sativa subsp. japonica (Rice).